A 140-amino-acid polypeptide reads, in one-letter code: Putative pre-16S rRNA nuclease (140 aa).

It belongs to the YqgF nuclease family.

It is found in the cytoplasm. Could be a nuclease involved in processing of the 5'-end of pre-16S rRNA. This Yersinia enterocolitica serotype O:8 / biotype 1B (strain NCTC 13174 / 8081) protein is Putative pre-16S rRNA nuclease.